A 474-amino-acid polypeptide reads, in one-letter code: ATP synthase subunit beta 2 (474 aa).

151-158 contributes to the ATP binding site; sequence GGAGVGKT.

Belongs to the ATPase alpha/beta chains family. In terms of assembly, F-type ATPases have 2 components, CF(1) - the catalytic core - and CF(0) - the membrane proton channel. CF(1) has five subunits: alpha(3), beta(3), gamma(1), delta(1), epsilon(1). CF(0) has four main subunits: a(1), b(1), b'(1) and c(9-12).

Its subcellular location is the cell inner membrane. The catalysed reaction is ATP + H2O + 4 H(+)(in) = ADP + phosphate + 5 H(+)(out). In terms of biological role, produces ATP from ADP in the presence of a proton gradient across the membrane. The catalytic sites are hosted primarily by the beta subunits. The polypeptide is ATP synthase subunit beta 2 (Dinoroseobacter shibae (strain DSM 16493 / NCIMB 14021 / DFL 12)).